The sequence spans 276 residues: Rhomboid protease GlpG (276 aa).

6 helical membrane-spanning segments follow: residues 94 to 114, 142 to 162, 169 to 189, 192 to 212, 229 to 249, and 250 to 270; these read GPVT…MSLI, IFMH…WYLG, LGSG…GYVQ, FSGP…GYVW, LIIF…GMSM, and ANGA…VDTL. The active-site Nucleophile is S201. The active site involves H254.

Belongs to the peptidase S54 family.

The protein resides in the cell inner membrane. It catalyses the reaction Cleaves type-1 transmembrane domains using a catalytic dyad composed of serine and histidine that are contributed by different transmembrane domains.. Functionally, rhomboid-type serine protease that catalyzes intramembrane proteolysis. The polypeptide is Rhomboid protease GlpG (Salmonella typhi).